The sequence spans 101 residues: MLVRENNSNDRSIIEYVIKILLISGISRIIILILAMFESIRHIIFHNDTNPSDARKFQMAICRLSSQKSRKLKNPIESSTTSHKKKGYVRKCYECLQIQVS.

The helical transmembrane segment at 17–37 (VIKILLISGISRIIILILAMF) threads the bilayer.

Its subcellular location is the endoplasmic reticulum membrane. This is an uncharacterized protein from Schizosaccharomyces pombe (strain 972 / ATCC 24843) (Fission yeast).